The sequence spans 165 residues: Cytochrome c-type biogenesis protein CcmE (165 aa).

The Cytoplasmic portion of the chain corresponds to 1 to 7 (MTRKQKR). A helical; Signal-anchor for type II membrane protein membrane pass occupies residues 8–28 (LAVIAGGMGFIIAAVLLVMFA). At 29-165 (FSQSVAYFYM…GQGQEAKATR (137 aa)) the chain is on the periplasmic side. Heme-binding residues include His-124 and Tyr-128. Over residues 144–154 (QDGQGAQSQAG) the composition is skewed to low complexity. The segment at 144-165 (QDGQGAQSQAGQGQGQEAKATR) is disordered.

It belongs to the CcmE/CycJ family.

The protein localises to the cell inner membrane. In terms of biological role, heme chaperone required for the biogenesis of c-type cytochromes. Transiently binds heme delivered by CcmC and transfers the heme to apo-cytochromes in a process facilitated by CcmF and CcmH. The chain is Cytochrome c-type biogenesis protein CcmE from Rhizobium etli (strain CIAT 652).